We begin with the raw amino-acid sequence, 34 residues long: Cytochrome b6-f complex subunit 8 (34 aa).

The chain crosses the membrane as a helical span at residues 3 to 23 (IFQIGWAALAAIFTFSIAMVV).

Belongs to the PetN family. In terms of assembly, the 4 large subunits of the cytochrome b6-f complex are cytochrome b6, subunit IV (17 kDa polypeptide, PetD), cytochrome f and the Rieske protein, while the 4 small subunits are PetG, PetL, PetM and PetN. The complex functions as a dimer.

It is found in the cellular thylakoid membrane. Functionally, component of the cytochrome b6-f complex, which mediates electron transfer between photosystem II (PSII) and photosystem I (PSI), cyclic electron flow around PSI, and state transitions. The protein is Cytochrome b6-f complex subunit 8 of Prochlorococcus marinus subsp. pastoris (strain CCMP1986 / NIES-2087 / MED4).